A 468-amino-acid chain; its full sequence is Protein NEN1 (468 aa).

The 162-residue stretch at 11–172 (FFDVETTVPK…DDVRMNLEVL (162 aa)) folds into the Exonuclease domain. The Mg(2+) site is built by Asp13 and Glu15. His159 serves as the catalytic Proton donor/acceptor. Residue Asp164 coordinates Mg(2+).

It depends on Mg(2+) as a cofactor. Expressed in the sieve elements and phloem pole pericycle cells.

It localises to the cytoplasm. The protein localises to the nucleus. Probable exonuclease involved in enuclation of sieve elements. The protein is Protein NEN1 of Arabidopsis thaliana (Mouse-ear cress).